The primary structure comprises 346 residues: Probable alcohol dehydrogenase AdhA (346 aa).

The Zn(2+) site is built by C51, H73, C109, C112, C115, C123, and C165.

Belongs to the zinc-containing alcohol dehydrogenase family. Requires Zn(2+) as cofactor.

It catalyses the reaction a primary alcohol + NAD(+) = an aldehyde + NADH + H(+). The catalysed reaction is a secondary alcohol + NAD(+) = a ketone + NADH + H(+). The polypeptide is Probable alcohol dehydrogenase AdhA (adhA) (Mycobacterium tuberculosis (strain CDC 1551 / Oshkosh)).